Here is a 540-residue protein sequence, read N- to C-terminus: Chaperonin GroEL (540 aa).

Residues 29–32, 86–90, Gly413, 476–478, and Asp492 each bind ATP; these read TLGP, DGTTT, and NAA.

This sequence belongs to the chaperonin (HSP60) family. In terms of assembly, forms a cylinder of 14 subunits composed of two heptameric rings stacked back-to-back. Interacts with the co-chaperonin GroES.

It is found in the cytoplasm. It carries out the reaction ATP + H2O + a folded polypeptide = ADP + phosphate + an unfolded polypeptide.. In terms of biological role, together with its co-chaperonin GroES, plays an essential role in assisting protein folding. The GroEL-GroES system forms a nano-cage that allows encapsulation of the non-native substrate proteins and provides a physical environment optimized to promote and accelerate protein folding. This is Chaperonin GroEL from Streptococcus pneumoniae (strain P1031).